The sequence spans 523 residues: Probable 3-ketoacyl-CoA synthase 20 (523 aa).

Helical transmembrane passes span 31 to 55 and 78 to 96; these read IVAVTALVAAAPRLSTLLAAAAAGG and ALAVACWAAALAAYTYAAS. Residues 93 to 382 enclose the FAE domain; it reads YAASRPRPVY…RFLATVVLKR (290 aa). Active-site residues include Cys237, His317, His401, His405, and Asn438.

It belongs to the thiolase-like superfamily. Chalcone/stilbene synthases family. As to expression, highly expressed in leaf sheaths. Expressed in leaves, flag leaves and panicles.

The protein localises to the membrane. The catalysed reaction is a very-long-chain acyl-CoA + malonyl-CoA + H(+) = a very-long-chain 3-oxoacyl-CoA + CO2 + CoA. Functionally, contributes to fatty acids elongation. Plays a role in controlling leaf anatomy and plant architecture. The chain is Probable 3-ketoacyl-CoA synthase 20 from Oryza sativa subsp. japonica (Rice).